The chain runs to 141 residues: Large ribosomal subunit protein uL16 (141 aa).

The protein belongs to the universal ribosomal protein uL16 family. In terms of assembly, part of the 50S ribosomal subunit.

Its function is as follows. Binds 23S rRNA and is also seen to make contacts with the A and possibly P site tRNAs. This is Large ribosomal subunit protein uL16 from Thermus thermophilus (strain ATCC BAA-163 / DSM 7039 / HB27).